A 517-amino-acid polypeptide reads, in one-letter code: Ubiquitin carboxyl-terminal hydrolase 30 (517 aa).

Over 1–35 (MLSSRAQAARTAADKALQRFLRTGAAVRYKVMKNW) the chain is Mitochondrial intermembrane. The chain crosses the membrane as a helical span at residues 36 to 56 (GVIGGIAAALAAGIYVIWGPI). Residues 57-517 (TERKKRRKGL…QQGREYRSEE (461 aa)) lie on the Cytoplasmic side of the membrane. One can recognise a USP domain in the interval 68 to 502 (PGLVNLGNTC…SAYLLFYERV (435 aa)). Residue Cys77 is the Nucleophile of the active site. Residues Lys235 and Lys289 each participate in a glycyl lysine isopeptide (Lys-Gly) (interchain with G-Cter in ubiquitin) cross-link. Residues 364–395 (SQHGPKATESPGSALGVQDTQAAPKPGLSQPA) form a disordered region. Residue His452 is the Proton acceptor of the active site.

It belongs to the peptidase C19 family. In terms of processing, ubiquitinated by parkin (PRKN) at Lys-235 and Lys-289, leading to its degradation.

Its subcellular location is the mitochondrion outer membrane. The enzyme catalyses Thiol-dependent hydrolysis of ester, thioester, amide, peptide and isopeptide bonds formed by the C-terminal Gly of ubiquitin (a 76-residue protein attached to proteins as an intracellular targeting signal).. With respect to regulation, inhibited by the diterpenoid derivative 15-oxospiramilactone (S3). Its function is as follows. Deubiquitinating enzyme tethered to the mitochondrial outer membrane that acts as a key inhibitor of mitophagy by counteracting the action of parkin (PRKN): hydrolyzes ubiquitin attached by parkin on target proteins, such as RHOT1/MIRO1 and TOMM20, thereby blocking parkin's ability to drive mitophagy. Preferentially cleaves 'Lys-6'- and 'Lys-11'-linked polyubiquitin chains, 2 types of linkage that participate in mitophagic signaling. Does not cleave efficiently polyubiquitin phosphorylated at 'Ser-65'. Acts as a negative regulator of mitochondrial fusion by mediating deubiquitination of MFN1 and MFN2. The sequence is that of Ubiquitin carboxyl-terminal hydrolase 30 (Usp30) from Rattus norvegicus (Rat).